Reading from the N-terminus, the 720-residue chain is F-box/LRR-repeat MAX2 homolog (720 aa).

Residues 14–60 enclose the F-box domain; sequence SSAILDLPEPLLLHILSFLTDVRSRHRAALACGRMRAAERATRSELS. 18 LRR repeats span residues 71-134, 135-158, 159-189, 190-218, 219-247, 248-279, 280-316, 317-344, 345-372, 373-398, 399-435, 436-452, 453-510, 511-537, 538-571, 572-606, 607-644, and 645-720; these read LFLS…QNAF, IAARLAGCFPAVTSLAVYCRDPTT, LANLTPHWQASLRRVKLVRWHQRPPTLPDGA, DLEPLLETCAALRELDLSEFYCWTEDVVR, ALTTHPSATAALTHLDLGLAAATDGFKSS, ELGPIAASCPNLRKLVAPCLFNPRFSDCVGDD, ALLSLATSCPRLTVLRLSEPFEAAANIQREEAAITVA, GLVAFFAALPALEDFTMDLQHNVLEAAP, AMEALARRCPRIKFLTLGSFQGLCKASW, LHLDGVAVCGGLESLYMKNCQDLTDA, SLAAIGRGCRRLAKFGIHGCDLVTSAGIRRLAFTLRP, TLKEVTVLHCRLLHTAE, CLTA…KCRY, MEFDDLGSWEMLRSLSLWFSAGQLLSP, LISAGLDSCPVLEEISIKVEGDCRTCPRPAPRTI, FGLSDLAGFPVLAKMKLDLSEAVGYALTAPTGQMD, LSLWERFYLHGIESLQTLYELDYWPPQDKDVHHRSLTL, and PAVG…QIDD.

As to quaternary structure, associates to a SCF (SKP1-CUL1-F-box protein) E3 ubiquitin-protein ligase complex. Interacts with D14 in a strigolactone-dependent manner. Interacts with SKP1, SKP5 and SKP20. As to expression, expressed in leaves. Expressed in roots, culms, leaf blades, leaf sheaths, shoot bases and panicles.

The protein localises to the nucleus. Involved in strigolactone (SL) signaling. Required for responses to SLs and the establishment of arbuscular mycorrhiza symbiosis in rice. Strigolactone-dependent association of D3 with D14 and D53 (a repressor of SL signaling) triggers D53 ubiquitination and degradation. Controls tillering by suppressing axillary bud activity. Tiller is a specialized grain-bearing branch that is formed on the unelongated basal internode and grows independently of the mother stem (culm) by means of its own adventitious roots. This chain is F-box/LRR-repeat MAX2 homolog, found in Oryza sativa subsp. japonica (Rice).